A 455-amino-acid polypeptide reads, in one-letter code: Bifunctional protein GlmU (455 aa).

The segment at 1–226 (MGLSVVILAA…EFEILGVNDR (226 aa)) is pyrophosphorylase. UDP-N-acetyl-alpha-D-glucosamine-binding positions include 8-11 (LAAG), Lys-22, Gln-73, 78-79 (GT), 99-101 (YGD), Gly-136, Glu-151, Asn-166, and Asn-224. Asp-101 provides a ligand contact to Mg(2+). Residue Asn-224 participates in Mg(2+) binding. Residues 227-247 (TQLASLERVWQRNVAEKIMAK) are linker. The N-acetyltransferase stretch occupies residues 248–455 (GVSIADPNRF…WQRSVKKTDK (208 aa)). Residues Arg-330 and Lys-348 each contribute to the UDP-N-acetyl-alpha-D-glucosamine site. The Proton acceptor role is filled by His-360. Residues Tyr-363 and Asn-374 each coordinate UDP-N-acetyl-alpha-D-glucosamine. Acetyl-CoA contacts are provided by residues Ala-377, 383 to 384 (NY), Ser-402, Ala-420, and Arg-437.

The protein in the N-terminal section; belongs to the N-acetylglucosamine-1-phosphate uridyltransferase family. In the C-terminal section; belongs to the transferase hexapeptide repeat family. As to quaternary structure, homotrimer. Mg(2+) is required as a cofactor.

The protein resides in the cytoplasm. It carries out the reaction alpha-D-glucosamine 1-phosphate + acetyl-CoA = N-acetyl-alpha-D-glucosamine 1-phosphate + CoA + H(+). It catalyses the reaction N-acetyl-alpha-D-glucosamine 1-phosphate + UTP + H(+) = UDP-N-acetyl-alpha-D-glucosamine + diphosphate. Its pathway is nucleotide-sugar biosynthesis; UDP-N-acetyl-alpha-D-glucosamine biosynthesis; N-acetyl-alpha-D-glucosamine 1-phosphate from alpha-D-glucosamine 6-phosphate (route II): step 2/2. It functions in the pathway nucleotide-sugar biosynthesis; UDP-N-acetyl-alpha-D-glucosamine biosynthesis; UDP-N-acetyl-alpha-D-glucosamine from N-acetyl-alpha-D-glucosamine 1-phosphate: step 1/1. It participates in bacterial outer membrane biogenesis; LPS lipid A biosynthesis. Its function is as follows. Catalyzes the last two sequential reactions in the de novo biosynthetic pathway for UDP-N-acetylglucosamine (UDP-GlcNAc). The C-terminal domain catalyzes the transfer of acetyl group from acetyl coenzyme A to glucosamine-1-phosphate (GlcN-1-P) to produce N-acetylglucosamine-1-phosphate (GlcNAc-1-P), which is converted into UDP-GlcNAc by the transfer of uridine 5-monophosphate (from uridine 5-triphosphate), a reaction catalyzed by the N-terminal domain. This is Bifunctional protein GlmU from Francisella tularensis subsp. holarctica (strain OSU18).